The primary structure comprises 1013 residues: Putative helicase mov-10-B.1 (1013 aa).

2 stretches are compositionally biased toward polar residues: residues 91 to 103 and 113 to 123; these read QWSR…QNHA and RPSTTRVSDPS. A disordered region spans residues 91-129; the sequence is QWSRPYRSQQNHATPHLNDAISRPSTTRVSDPSSVPEPE. Residue 550-557 participates in ATP binding; that stretch reads GPPGTGKT. Residues 672-675 carry the DEAG box motif; it reads DEAG.

Belongs to the DNA2/NAM7 helicase family. SDE3 subfamily.

Its subcellular location is the cytoplasm. The protein localises to the P-body. It carries out the reaction ATP + H2O = ADP + phosphate + H(+). Functionally, probable RNA helicase. Required for RNA-mediated gene silencing by the RNA-induced silencing complex (RISC). Required for both miRNA-mediated translational repression and miRNA-mediated cleavage of complementary mRNAs by RISC. The sequence is that of Putative helicase mov-10-B.1 (mov10b.1) from Danio rerio (Zebrafish).